The sequence spans 252 residues: 5'-nucleotidase SurE (252 aa).

A divalent metal cation is bound by residues Asp8, Asp9, Ser42, and Asn94.

This sequence belongs to the SurE nucleotidase family. A divalent metal cation is required as a cofactor.

The protein resides in the cytoplasm. It carries out the reaction a ribonucleoside 5'-phosphate + H2O = a ribonucleoside + phosphate. Its function is as follows. Nucleotidase that shows phosphatase activity on nucleoside 5'-monophosphates. The polypeptide is 5'-nucleotidase SurE (Ehrlichia ruminantium (strain Welgevonden)).